The following is a 165-amino-acid chain: MKTSRLPIAIQQAVMRRLWEKLAQANLKLGRNYPEPKLSYTQRGTSAGTAWLESYEIRLNPVLLLENSEAFIEEVVPHELAHLLVWKHFGRVAPHGKEWKWMMESVLGVPARRTHQFELQSVRRNTFPYRCKCQEHQLTVRRHNRVVRGEAVYRCVHCGEQLTAK.

The SprT-like domain occupies 22–163; the sequence is LAQANLKLGR…RCVHCGEQLT (142 aa). Zn(2+) is bound at residue histidine 78. Glutamate 79 is a catalytic residue. A Zn(2+)-binding site is contributed by histidine 82.

Belongs to the SprT family. Requires Zn(2+) as cofactor.

Its subcellular location is the cytoplasm. The chain is Protein SprT from Escherichia fergusonii (strain ATCC 35469 / DSM 13698 / CCUG 18766 / IAM 14443 / JCM 21226 / LMG 7866 / NBRC 102419 / NCTC 12128 / CDC 0568-73).